The primary structure comprises 182 residues: Ribosome-recycling factor (182 aa).

The segment at 136–158 (IKKQEKEGDLSEDQSRDEQDQVQ) is disordered.

Belongs to the RRF family.

It is found in the cytoplasm. Functionally, responsible for the release of ribosomes from messenger RNA at the termination of protein biosynthesis. May increase the efficiency of translation by recycling ribosomes from one round of translation to another. The polypeptide is Ribosome-recycling factor (Synechococcus sp. (strain CC9311)).